The sequence spans 438 residues: Xylose isomerase (438 aa).

Catalysis depends on residues H100 and D103. Mg(2+)-binding residues include E231, E267, H270, D295, D306, D308, and D338.

Belongs to the xylose isomerase family. As to quaternary structure, homotetramer. It depends on Mg(2+) as a cofactor.

Its subcellular location is the cytoplasm. The enzyme catalyses alpha-D-xylose = alpha-D-xylulofuranose. This is Xylose isomerase from Pseudomonas fluorescens (strain Pf0-1).